Here is a 280-residue protein sequence, read N- to C-terminus: uncharacterized protein (280 aa).

A run of 7 helical transmembrane segments spans residues Tyr-6–Val-26, Val-38–Pro-58, Ile-79–Lys-99, Gly-105–Phe-125, Asn-144–Trp-164, Ile-171–Val-191, and Leu-231–Ala-251.

Its subcellular location is the cell membrane. This is an uncharacterized protein from Mycoplasma genitalium (strain ATCC 33530 / DSM 19775 / NCTC 10195 / G37) (Mycoplasmoides genitalium).